A 373-amino-acid polypeptide reads, in one-letter code: GDP-mannose 4,6 dehydratase 2 (373 aa).

Residues 1–15 (MASENNGSRSDSESI) are compositionally biased toward polar residues. The tract at residues 1 to 21 (MASENNGSRSDSESITAPKAD) is disordered. NADP(+)-binding positions include 35–40 (GITGQD), R60, 91–92 (DL), 113–117 (LAAQS), and Y128. S117 contributes to the substrate binding site. S162 provides a ligand contact to substrate. S162 is an active-site residue. Active-site nucleophile residues include E164 and Y185. Y185 is a substrate binding site. K189 contacts NADP(+). N214 lines the substrate pocket. The NADP(+) site is built by H215 and R220. Substrate-binding positions include 220-228 (RGENFVTRK), G247, R253, and 314-317 (RPAE).

This sequence belongs to the NAD(P)-dependent epimerase/dehydratase family. GDP-mannose 4,6-dehydratase subfamily. In terms of assembly, homotetramer. Binds to GER1. It depends on NADP(+) as a cofactor. In terms of tissue distribution, expressed in roots, flowers, siliques, leaves and stems. Not expressed in the root meristem and the proximal part of the elongation zone, or in emerging lateral roots. Expressed in trichomes and guard cells, and in pollen just before anthesis.

It catalyses the reaction GDP-alpha-D-mannose = GDP-4-dehydro-alpha-D-rhamnose + H2O. The protein operates within nucleotide-sugar biosynthesis; GDP-L-fucose biosynthesis via de novo pathway; GDP-L-fucose from GDP-alpha-D-mannose: step 1/2. Functionally, catalyzes the conversion of GDP-D-mannose to GDP-4-dehydro-6-deoxy-D-mannose. This chain is GDP-mannose 4,6 dehydratase 2 (MUR1), found in Arabidopsis thaliana (Mouse-ear cress).